The sequence spans 571 residues: MTRRMDRRQYAQVYGPTTGDRVRLGDTALVLEVDRDLTVYGDECVFGGGKVLRDGMGQAAGAPPEEVLDLVITNALVLDQGGVTKADVGIRGGRIAALGKAGNPDAMAGVTPGMTIGPGTECIAGEGLILTAGGVDSHIHFISPQQAYEAIASGVTTMLGGGTGPATGTNATTCTPGARHVALLLQATDALPVNIGLLGKGNAASPEGLAEQVRAGAVGLKLHEDWGTTPAAIDTCLRVADQLDVQVAIHTDTLNESGCAEHSIAAFAGRTIHTFHTEGAGGGHAPDIIRVCGEPNVLPSSTNPTRPFTVNTVDEHLDMLVVCHHLDPSLPEDLAFAESRIRRETIAAEDVLHDLGAISMMSSDSQAMGRVGEVVTRTWQTADKMRRQRGRLPEERGDNDNLRIRRYLAKYTINPAVAHGLSHEVGSVEPGKLADLVLWRPALFGAKPELVLKGGLIAWAQMGDANASIPTPQPVVARPMFGALGRAVGATSVAFVSRASLEGGAVQGYGLAKRLVAVHGCRGLGKKDMRLNDALPRMEVDPETYEVRADGVLLRCEPAARLPLAQRYFLF.

The 439-residue stretch at 133 to 571 folds into the Urease domain; the sequence is GGVDSHIHFI…LPLAQRYFLF (439 aa). Ni(2+)-binding residues include His138, His140, and Lys221. N6-carboxylysine is present on Lys221. A substrate-binding site is contributed by His223. The Ni(2+) site is built by His250 and His276. The active-site Proton donor is His324. Asp364 is a Ni(2+) binding site.

Belongs to the metallo-dependent hydrolases superfamily. Urease alpha subunit family. As to quaternary structure, heterotrimer of UreA (gamma), UreB (beta) and UreC (alpha) subunits. Three heterotrimers associate to form the active enzyme. Requires Ni cation as cofactor. Post-translationally, carboxylation allows a single lysine to coordinate two nickel ions.

It is found in the cytoplasm. The enzyme catalyses urea + 2 H2O + H(+) = hydrogencarbonate + 2 NH4(+). It functions in the pathway nitrogen metabolism; urea degradation; CO(2) and NH(3) from urea (urease route): step 1/1. This chain is Urease subunit alpha, found in Anaeromyxobacter sp. (strain Fw109-5).